We begin with the raw amino-acid sequence, 216 residues long: Soluble inorganic pyrophosphatase 3 (216 aa).

Over residues 1-10 the composition is skewed to acidic residues; that stretch reads MSEEAYEETQ. The tract at residues 1-21 is disordered; that stretch reads MSEEAYEETQESSQSPRPVPK. Positions 66 and 80 each coordinate substrate. The active-site Proton donor is the Tyr88. Tyr92 contributes to the substrate binding site. Mg(2+) contacts are provided by Asp102, Asp107, and Asp139. Residue Tyr176 coordinates substrate.

It belongs to the PPase family. The cofactor is Mg(2+). In terms of tissue distribution, expressed preferentially in stamen, pollen and flower, and at a low level in lateral roots and root elongation zones.

It is found in the cytoplasm. It catalyses the reaction diphosphate + H2O = 2 phosphate + H(+). This chain is Soluble inorganic pyrophosphatase 3, found in Arabidopsis thaliana (Mouse-ear cress).